A 1253-amino-acid chain; its full sequence is Pleckstrin homology-like domain family B member 2 (1253 aa).

The segment covering 1–12 has biased composition (basic and acidic residues); the sequence is MEEHSYIQKELD. Disordered stretches follow at residues 1–43, 60–159, and 187–212; these read MEEH…PKKY, LTLS…KSHD, and DAGP…RKMS. Residues 29 to 43 show a composition bias toward polar residues; sequence NDSQNMMESLSPKKY. Ser-71 and Ser-73 each carry phosphoserine. Residues 74–96 are compositionally biased toward polar residues; it reads PLGTSVRSSPSLAKIQGSKQFSY. Positions 126 to 144 are enriched in basic and acidic residues; sequence ADFDHYTGRDSERALRLSE. Ser-157, Ser-204, Ser-212, Ser-242, and Ser-245 each carry phosphoserine. Residues 265–286 form a disordered region; it reads NQLTPLSLPPRNSLGNSKRTKL. Ser-330, Ser-334, Ser-348, Ser-351, Ser-384, Ser-387, Ser-415, Ser-420, Ser-468, Ser-489, and Ser-501 each carry phosphoserine. Thr-504 bears the Phosphothreonine mark. The residue at position 513 (Ser-513) is a Phosphoserine. Positions 525–567 are disordered; the sequence is LSQSSASFFTPRSTRNDELLSDLTRTPPPPSSTFPKASSESSY. Phosphothreonine is present on residues Thr-550 and Thr-574. 2 coiled-coil regions span residues 584–696 and 722–807; these read SQEL…LDNC and FEDL…LCNL. Thr-898 is modified (phosphothreonine). Residues 1032 to 1098 adopt a coiled-coil conformation; it reads IARIEEMERL…QKLIEKEVKI (67 aa). The PH domain maps to 1143 to 1246; sequence EKTCRGFLIK…WMDVIVTGAE (104 aa).

Interacts with FLNC. Interacts with AMOTL2; interaction may facilitate PHLDB2 localization to the myotube podosome cortex that surrounds the core. Part of a cortical microtubule stabilization complex (CMSC) composed of KANK1, PPFIA1, PPFIBP1, ERC1/ELKS, PHLDB2/LL5beta, CLASPs, KIF21A and possibly additional interactors; within CMSCs KANK1 and PHLDB2/LL5beta appear to be the core components for targeting of microtubule-binding proteins KIF21A and CLASPs, whereas PPFIA1, PPFIBP1 and ERC1/ELKS serve as scaffolds for protein clustering.

The protein resides in the cytoplasm. Its subcellular location is the cell cortex. The protein localises to the membrane. It localises to the cell projection. It is found in the podosome. Its function is as follows. Seems to be involved in the assembly of the postsynaptic apparatus. May play a role in acetyl-choline receptor (AChR) aggregation in the postsynaptic membrane. This is Pleckstrin homology-like domain family B member 2 (PHLDB2) from Homo sapiens (Human).